Consider the following 627-residue polypeptide: Coiled-coil domain-containing protein 22 (627 aa).

The sufficient for interaction with COMMD1 stretch occupies residues 1–321 (MEEADRILIH…VSDVPATSRR (321 aa)). The sufficicient and required for interaction with CCDC93 stretch occupies residues 1 to 447 (MEEADRILIH…LQDCRELESS (447 aa)). The segment at 218-243 (TGRDRPGDEDWVHRTSRLPPQEDTRA) is disordered. Residues 219–230 (GRDRPGDEDWVH) are compositionally biased toward basic and acidic residues. Residues 320–627 (RRPEQVTWAA…AGLLGRVREA (308 aa)) adopt a coiled-coil conformation. S410 is modified (phosphoserine).

The protein belongs to the CCDC22 family. As to quaternary structure, component of the commander complex consisting of the CCC subcomplex and the retriever subcomplex. Component of the CCC (COMMD/CCDC22/CCDC93) subcomplex consisting of COMMD1, COMMD2, COMMD3, COMMD4, COMMD5, COMMD6, COMMD7, COMMD8, COMMD9, COMMD10, CCDC22 and CCDC93. Forms a coiled-coil heterodimer with CCDC22; this heterodimer interacts with the guanine nucleotide exchange factor DENND10; the interaction is direct. Interacts with CUL1, CUL2, CUL3, SKP1, BTRC. Interacts with SNX17 and SNX31. Interacts with CPNE1 and CPNE4. In terms of tissue distribution, widely expressed in adult tissues and in fetal liver and brain, with highest levels in prostate and lowest in skeletal muscle.

It localises to the endosome. It is found in the cytoplasm. The protein resides in the cytoskeleton. Its subcellular location is the microtubule organizing center. The protein localises to the centrosome. Component of the commander complex that is essential for endosomal recycling of transmembrane cargos; the Commander complex is composed of composed of the CCC subcomplex and the retriever subcomplex. Component of the CCC complex, which is involved in the regulation of endosomal recycling of surface proteins, including integrins, signaling receptor and channels. Involved in regulation of NF-kappa-B signaling. Promotes ubiquitination of I-kappa-B-kinase subunit IKBKB and its subsequent proteasomal degradation leading to NF-kappa-B activation; the function may involve association with COMMD8 and a CUL1-dependent E3 ubiquitin ligase complex. May down-regulate NF-kappa-B activity via association with COMMD1 and involving a CUL2-dependent E3 ubiquitin ligase complex. Regulates the cellular localization of COMM domain-containing proteins, such as COMMD1 and COMMD10. Component of the CCC complex, which is involved in the regulation of endosomal recycling of surface proteins, including integrins, signaling receptor and channels. The CCC complex associates with SNX17, retriever and WASH complexes to prevent lysosomal degradation and promote cell surface recycling of numerous cargos such as integrins ITGA5:ITGB1. Plays a role in copper ion homeostasis. Involved in copper-dependent ATP7A trafficking between the trans-Golgi network and vesicles in the cell periphery; the function is proposed to depend on its association within the CCC complex and cooperation with the WASH complex on early endosomes. Its function is as follows. (Microbial infection) The CCC complex, in collaboration with the heterotrimeric retriever complex, mediates the exit of human papillomavirus to the cell surface. This chain is Coiled-coil domain-containing protein 22 (CCDC22), found in Homo sapiens (Human).